Here is a 500-residue protein sequence, read N- to C-terminus: NAD(P)H-quinone oxidoreductase chain 4, chloroplastic (500 aa).

The next 14 helical transmembrane spans lie at 4-24 (FPWL…IFFL), 35-55 (YTIC…CYHF), 87-107 (IGPI…AWPI), 113-130 (LFHF…GSFS), 134-154 (LLLF…LLCM), 167-187 (FILY…GVAL), 208-228 (VLEI…SPII), 242-262 (HYST…YGLI), 272-292 (AHSI…IYAA), 305-325 (IAYS…SLTD), 330-350 (GALL…FLAG), 386-406 (LALP…GIIT), 411-431 (LLIP…LTPI), and 462-482 (LFLS…PDFV).

It belongs to the complex I subunit 4 family.

Its subcellular location is the plastid. It is found in the chloroplast thylakoid membrane. The enzyme catalyses a plastoquinone + NADH + (n+1) H(+)(in) = a plastoquinol + NAD(+) + n H(+)(out). It carries out the reaction a plastoquinone + NADPH + (n+1) H(+)(in) = a plastoquinol + NADP(+) + n H(+)(out). The protein is NAD(P)H-quinone oxidoreductase chain 4, chloroplastic of Nicotiana tomentosiformis (Tobacco).